The following is a 168-amino-acid chain: MSTDSILTTVPIQWLSVDSPVLPDEVLDWLMELGSMTRRFEQYCNSVRIIPFRECFITEEQLSDENERLLTGQRYWLREIVLCGDNIPWLLGRTLIPETTLTGPDESLVDLGTVPLGRYLFSGNKLTRDYIHVGQQGNRWARRSLLRLSGKPLLLTEVFLPESPVYKR.

M36, R78, L116, and E157 together coordinate substrate.

Belongs to the UbiC family. Monomer.

The protein resides in the cytoplasm. The catalysed reaction is chorismate = 4-hydroxybenzoate + pyruvate. It participates in cofactor biosynthesis; ubiquinone biosynthesis. Removes the pyruvyl group from chorismate, with concomitant aromatization of the ring, to provide 4-hydroxybenzoate (4HB) for the ubiquinone pathway. This is Chorismate pyruvate-lyase from Photorhabdus laumondii subsp. laumondii (strain DSM 15139 / CIP 105565 / TT01) (Photorhabdus luminescens subsp. laumondii).